The chain runs to 480 residues: Cobyric acid synthase (480 aa).

Residues 246-434 (KILIAVPILP…VHGLFSELAQ (189 aa)) form the GATase cobBQ-type domain. Residue Cys328 is the Nucleophile of the active site. His426 is an active-site residue.

Belongs to the CobB/CobQ family. CobQ subfamily.

It participates in cofactor biosynthesis; adenosylcobalamin biosynthesis. Its function is as follows. Catalyzes amidations at positions B, D, E, and G on adenosylcobyrinic A,C-diamide. NH(2) groups are provided by glutamine, and one molecule of ATP is hydrogenolyzed for each amidation. In Methylocella silvestris (strain DSM 15510 / CIP 108128 / LMG 27833 / NCIMB 13906 / BL2), this protein is Cobyric acid synthase.